An 89-amino-acid chain; its full sequence is Small ribosomal subunit protein bS20 (89 aa).

The interval 1 to 20 is disordered; it reads MANHKSAEKRARQTIKRTER.

It belongs to the bacterial ribosomal protein bS20 family.

In terms of biological role, binds directly to 16S ribosomal RNA. This chain is Small ribosomal subunit protein bS20, found in Campylobacter concisus (strain 13826).